We begin with the raw amino-acid sequence, 355 residues long: Protein RecA (355 aa).

65–72 serves as a coordination point for ATP; the sequence is GPESSGKT.

It belongs to the RecA family.

It localises to the cytoplasm. Can catalyze the hydrolysis of ATP in the presence of single-stranded DNA, the ATP-dependent uptake of single-stranded DNA by duplex DNA, and the ATP-dependent hybridization of homologous single-stranded DNAs. It interacts with LexA causing its activation and leading to its autocatalytic cleavage. The polypeptide is Protein RecA (Pseudomonas putida (strain W619)).